The sequence spans 79 residues: Exodeoxyribonuclease 7 small subunit (79 aa).

Belongs to the XseB family. As to quaternary structure, heterooligomer composed of large and small subunits.

It localises to the cytoplasm. It catalyses the reaction Exonucleolytic cleavage in either 5'- to 3'- or 3'- to 5'-direction to yield nucleoside 5'-phosphates.. Functionally, bidirectionally degrades single-stranded DNA into large acid-insoluble oligonucleotides, which are then degraded further into small acid-soluble oligonucleotides. In Lactococcus lactis subsp. cremoris (strain MG1363), this protein is Exodeoxyribonuclease 7 small subunit.